The primary structure comprises 148 residues: Probable transporter PD_1893 (148 aa).

A run of 4 helical transmembrane segments spans residues 11–31, 48–68, 93–113, and 118–138; these read FTVA…SEMI, NPSL…GMAL, IVFG…CPGP, and LSTG…GMII.

It belongs to the TsuA/YedE (TC 9.B.102) family.

The protein localises to the cell inner membrane. This Xylella fastidiosa (strain Temecula1 / ATCC 700964) protein is Probable transporter PD_1893.